Here is a 154-residue protein sequence, read N- to C-terminus: Large ribosomal subunit protein uL24 (154 aa).

A disordered region spans residues 97 to 154 (EIAARKNLPPPEVPEETSNDTKESDENVTGADKEETNEIKEEDLNDNEDKNNDGSQEA). Basic and acidic residues predominate over residues 115–135 (NDTKESDENVTGADKEETNEI).

Belongs to the universal ribosomal protein uL24 family. In terms of assembly, part of the 50S ribosomal subunit.

One of two assembly initiator proteins, it binds directly to the 5'-end of the 23S rRNA, where it nucleates assembly of the 50S subunit. Its function is as follows. Located at the polypeptide exit tunnel on the outside of the subunit. The protein is Large ribosomal subunit protein uL24 of Picrophilus torridus (strain ATCC 700027 / DSM 9790 / JCM 10055 / NBRC 100828 / KAW 2/3).